Consider the following 106-residue polypeptide: Replication restart protein PriB (106 aa).

An SSB domain is found at 4–103 (VNRLVLSGTV…LHAEQIELID (100 aa)).

This sequence belongs to the PriB family. As to quaternary structure, homodimer. Interacts with PriA and DnaT. Component of the replication restart primosome. Primosome assembly occurs via a 'hand-off' mechanism. PriA binds to replication forks, subsequently PriB then DnaT bind; DnaT then displaces ssDNA to generate the helicase loading substrate.

Its function is as follows. Involved in the restart of stalled replication forks, which reloads the replicative helicase on sites other than the origin of replication; the PriA-PriB pathway is the major replication restart pathway. During primosome assembly it facilitates complex formation between PriA and DnaT on DNA; stabilizes PriA on DNA. Stimulates the DNA unwinding activity of PriA helicase. The protein is Replication restart protein PriB of Pectobacterium carotovorum subsp. carotovorum (strain PC1).